We begin with the raw amino-acid sequence, 1010 residues long: Retinoblastoma-related protein 1 (1010 aa).

The segment at 1-23 (MEGAAPPASSGSEVTGAGSGKVD) is disordered. The interval 419-619 (TPVSTAMTTA…EKGSSMYNSL (201 aa)) is domain A. The interval 419–861 (TPVSTAMTTA…NEVFIPTVKP (443 aa)) is pocket. The segment at 620 to 730 (IVARPTLSAE…PAAGGELCAE (111 aa)) is spacer. The tract at residues 657–679 (LPPLPFQKQEHSPDKDEVRSPKR) is disordered. The segment covering 664–679 (KQEHSPDKDEVRSPKR) has biased composition (basic and acidic residues). The interval 731 to 861 (TGIGVFLSKI…NEVFIPTVKP (131 aa)) is domain B. The disordered stretch occupies residues 868–898 (SGTSPNKKNEEKCAADGPYPESPRLSRFPNL).

Belongs to the retinoblastoma protein (RB) family.

It is found in the nucleus. Its function is as follows. Regulator of biological processes that recruits a histone deacetylase to control gene transcription. May play a role in the entry into mitosis, negatively regulating the cell proliferation. Formation of stable complexes with geminiviridae replication-associated proteins may create a cellular environment which favors viral DNA replication. The sequence is that of Retinoblastoma-related protein 1 (RBR1) from Oryza sativa subsp. japonica (Rice).